The following is a 953-amino-acid chain: 26S proteasome non-ATPase regulatory subunit 1 (953 aa).

Position 1 is an N-acetylmethionine (Met1). At Thr273 the chain carries Phosphothreonine. Residues 277-319 are disordered; the sequence is SVPGSTNTGTVPGPEKDSDSMETEEKTAGAVAGKTPDASPEPK. Basic and acidic residues predominate over residues 290-303; that stretch reads PEKDSDSMETEEKT. Residue Lys310 is modified to N6-acetyllysine. At Thr311 the chain carries Phosphothreonine. A Phosphoserine modification is found at Ser315. PC repeat units lie at residues 403–436, 441–474, 476–510, 511–545, 547–580, 581–616, 617–649, 651–685, 686–726, and 729–761; these read TATASLGVIHKGHEKEALQLMATYLPKDTSPGSA, GGLYALGLIHANHGGDIIDYLLNQLKNASNDIVR, GGSLGLGLAAMGTARQDVYDLLKTNLYQDDAVTGE, AAGLALGLVMLGSKNTQAIEDMVGYAQETQHEKIL, GLAVGIALVMYGRMEEADALIESLCRDKDPILRR, SGMYTVAMAYCGSGNNKAIRRLLHVAVSDVNDDVRR, AAVESLGFILFRTPEQCPSVVSLLSESYNPHVR, GAAMALGVCCAGTGNKEAINLLEPMTNDPVNYVRQ, GALI…DVMA, and GAILAQGILDAGGHNVTISLQSRTGHTHMPSVV. Lys720 is modified (N6-acetyllysine). Thr830 is modified (phosphothreonine). Ser834 bears the Phosphoserine mark. 2 disordered regions span residues 839-881 and 930-953; these read AKKK…LDNP and AHGPKIEEEEQEPEPPEPFEYIDD. Basic and acidic residues-rich tracts occupy residues 842-852 and 859-872; these read KEKEKEKKEEE and AEKKEEKEKKKEPE. Over residues 936-953 the composition is skewed to acidic residues; it reads EEEEQEPEPPEPFEYIDD.

It belongs to the proteasome subunit S1 family. As to quaternary structure, component of the 19S proteasome regulatory particle complex. The 26S proteasome consists of a 20S core particle (CP) and two 19S regulatory subunits (RP). The regulatory particle is made of a lid composed of 9 subunits, a base containing 6 ATPases and few additional components including PSMD1. Interacts with ADRM1. Interacts with ZFAND1.

Its function is as follows. Component of the 26S proteasome, a multiprotein complex involved in the ATP-dependent degradation of ubiquitinated proteins. This complex plays a key role in the maintenance of protein homeostasis by removing misfolded or damaged proteins, which could impair cellular functions, and by removing proteins whose functions are no longer required. Therefore, the proteasome participates in numerous cellular processes, including cell cycle progression, apoptosis, or DNA damage repair. The sequence is that of 26S proteasome non-ATPase regulatory subunit 1 (Psmd1) from Rattus norvegicus (Rat).